Here is a 394-residue protein sequence, read N- to C-terminus: Ornithine aminotransferase 1 (394 aa).

Lysine 252 bears the N6-(pyridoxal phosphate)lysine mark.

It belongs to the class-III pyridoxal-phosphate-dependent aminotransferase family. OAT subfamily. Requires pyridoxal 5'-phosphate as cofactor.

It is found in the cytoplasm. It carries out the reaction a 2-oxocarboxylate + L-ornithine = L-glutamate 5-semialdehyde + an L-alpha-amino acid. It participates in amino-acid biosynthesis; L-proline biosynthesis; L-glutamate 5-semialdehyde from L-ornithine: step 1/1. Functionally, catalyzes the interconversion of ornithine to glutamate semialdehyde. This Staphylococcus aureus (strain MRSA252) protein is Ornithine aminotransferase 1.